A 138-amino-acid chain; its full sequence is Small ribosomal subunit protein uS11c (138 aa).

It belongs to the universal ribosomal protein uS11 family. Part of the 30S ribosomal subunit.

The protein localises to the plastid. It is found in the chloroplast. This Nandina domestica (Heavenly bamboo) protein is Small ribosomal subunit protein uS11c.